The chain runs to 265 residues: Transcriptional activator AggR (265 aa).

Positions 164 to 261 (DKVRNTIEKD…GITPKQFLTY (98 aa)) constitute an HTH araC/xylS-type domain. DNA-binding regions (H-T-H motif) lie at residues 181–202 (AIIA…ESEY) and 228–251 (ISQI…VKHF).

In terms of assembly, homodimer.

Transcriptional activator of aggregative adherence fimbria I expression in enteroaggregative E.coli. The protein is Transcriptional activator AggR (aggR) of Escherichia coli.